The sequence spans 689 residues: Glycine--tRNA ligase beta subunit (689 aa).

The protein belongs to the class-II aminoacyl-tRNA synthetase family. In terms of assembly, tetramer of two alpha and two beta subunits.

The protein localises to the cytoplasm. The enzyme catalyses tRNA(Gly) + glycine + ATP = glycyl-tRNA(Gly) + AMP + diphosphate. The sequence is that of Glycine--tRNA ligase beta subunit from Shigella boydii serotype 4 (strain Sb227).